The following is a 149-amino-acid chain: Protein OPG200 (149 aa).

It belongs to the orthopoxvirus OPG200 family. As to quaternary structure, homodimers. Interacts with host IKBKB; this interaction inhibits host NF-kappa-B activation.

Functionally, contributes to virulence by binding to the host IKBKB subunit of the IKK complex and preventing host NF-kappa-B activation in response to pro-inflammatory stimuli such as TNF-alpha or IL1B. Mechanistically, sterically hinders the direct contact between the kinase domains of IKBKB in the IKK complex containing IKBKB, CHUK/IKKA and NEMO. The polypeptide is Protein OPG200 (OPG200) (Vaccinia virus (strain Western Reserve) (VACV)).